A 227-amino-acid polypeptide reads, in one-letter code: PKHD-type hydroxylase Mnod_1077 (227 aa).

The region spanning 78–178 (RVLPPLFNRY…RWSAFFWSQS (101 aa)) is the Fe2OG dioxygenase domain. 3 residues coordinate Fe cation: His96, Asp98, and His159. Arg169 provides a ligand contact to 2-oxoglutarate.

It depends on Fe(2+) as a cofactor. The cofactor is L-ascorbate.

In Methylobacterium nodulans (strain LMG 21967 / CNCM I-2342 / ORS 2060), this protein is PKHD-type hydroxylase Mnod_1077.